Here is a 183-residue protein sequence, read N- to C-terminus: Translation initiation factor IF-3 (183 aa).

Belongs to the IF-3 family. In terms of assembly, monomer.

It is found in the cytoplasm. In terms of biological role, IF-3 binds to the 30S ribosomal subunit and shifts the equilibrium between 70S ribosomes and their 50S and 30S subunits in favor of the free subunits, thus enhancing the availability of 30S subunits on which protein synthesis initiation begins. The protein is Translation initiation factor IF-3 of Serratia marcescens.